Consider the following 546-residue polypeptide: E3 ubiquitin-protein ligase NEURL1B (546 aa).

Residues 38–194 (APRFHAQAKG…ITDEVQLLES (157 aa)) form the NHR 1 domain. Thr199 is modified (phosphothreonine). The NHR 2 domain maps to 270-424 (ELRFHATRGP…GVAGQLRLLG (155 aa)). Positions 429–490 (SSETMTPSGS…FSAPEPTGSR (62 aa)) are disordered. Residues 457–471 (SSSASESSLVTAPSS) are compositionally biased toward low complexity. The RING-type zinc-finger motif lies at 494 to 534 (CTVCFDSEVDTVIYTCGHMCLCHGCGLRLRRQARACCPICR).

As to quaternary structure, interacts with DLL1 and DLL4. In terms of tissue distribution, expressed in the limb buds and dorsal root ganglia. Expressed in brain and kidney and at low levels in the heart.

The protein localises to the cytoplasm. It carries out the reaction S-ubiquitinyl-[E2 ubiquitin-conjugating enzyme]-L-cysteine + [acceptor protein]-L-lysine = [E2 ubiquitin-conjugating enzyme]-L-cysteine + N(6)-ubiquitinyl-[acceptor protein]-L-lysine.. The protein operates within protein modification; protein ubiquitination. E3 ubiquitin-protein ligase involved in regulation of the Notch pathway through influencing the stability and activity of several Notch ligands. The polypeptide is E3 ubiquitin-protein ligase NEURL1B (Neurl1b) (Mus musculus (Mouse)).